The primary structure comprises 206 residues: Small ribosomal subunit protein uS2 (206 aa).

It belongs to the universal ribosomal protein uS2 family.

The chain is Small ribosomal subunit protein uS2 from Methanothrix thermoacetophila (strain DSM 6194 / JCM 14653 / NBRC 101360 / PT) (Methanosaeta thermophila).